A 140-amino-acid chain; its full sequence is Acyl-coenzyme A thioesterase 13 (140 aa).

Met-1 carries the post-translational modification N-acetylmethionine. Thr-2 is modified (N-acetylthreonine; in Acyl-coenzyme A thioesterase 13, N-terminally processed). N6-acetyllysine is present on residues Lys-27, Lys-37, and Lys-43. A CoA-binding site is contributed by Glu-46. Substrate contacts are provided by Asn-50 and Gly-81. Residues Ser-83, 90–95 (YMSPAK), and 108–113 (KQGKTL) contribute to the CoA site. Lys-108 and Lys-127 each carry N6-acetyllysine. His-137 contacts CoA.

It belongs to the thioesterase PaaI family. As to quaternary structure, homotetramer. Interacts with PCTP.

It is found in the cytoplasm. The protein localises to the cytosol. It localises to the mitochondrion. The protein resides in the nucleus. Its subcellular location is the cytoskeleton. It is found in the spindle. The enzyme catalyses a fatty acyl-CoA + H2O = a fatty acid + CoA + H(+). It carries out the reaction decanoyl-CoA + H2O = decanoate + CoA + H(+). The catalysed reaction is octanoyl-CoA + H2O = octanoate + CoA + H(+). It catalyses the reaction butanoyl-CoA + H2O = butanoate + CoA + H(+). The enzyme catalyses hexanoyl-CoA + H2O = hexanoate + CoA + H(+). It carries out the reaction tetradecanoyl-CoA + H2O = tetradecanoate + CoA + H(+). The catalysed reaction is hexadecanoyl-CoA + H2O = hexadecanoate + CoA + H(+). It catalyses the reaction dodecanoyl-CoA + H2O = dodecanoate + CoA + H(+). The enzyme catalyses (9Z)-octadecenoyl-CoA + H2O = (9Z)-octadecenoate + CoA + H(+). It carries out the reaction (5Z,8Z,11Z,14Z)-eicosatetraenoyl-CoA + H2O = (5Z,8Z,11Z,14Z)-eicosatetraenoate + CoA + H(+). Its function is as follows. Catalyzes the hydrolysis of acyl-CoAs into free fatty acids and coenzyme A (CoASH), regulating their respective intracellular levels. Has acyl-CoA thioesterase activity towards medium (C12) and long-chain (C18) fatty acyl-CoA substrates. Can also hydrolyze 3-hydroxyphenylacetyl-CoA and 3,4-dihydroxyphenylacetyl-CoA (in vitro). May play a role in controlling adaptive thermogenesis. The polypeptide is Acyl-coenzyme A thioesterase 13 (Homo sapiens (Human)).